The sequence spans 618 residues: Manganese lipoxygenase (618 aa).

Residues 1–16 (MRSRILAIVFAARHVA) form the signal peptide. Residues 36–45 (SSTTVLPSPT) are compositionally biased toward low complexity. The interval 36-58 (SSTTVLPSPTQYTLPNNDPNQGA) is disordered. A compositionally biased stretch (polar residues) spans 46 to 58 (QYTLPNNDPNQGA). The 571-residue stretch at 47–617 (YTLPNNDPNQ…NPAVNPFFLS (571 aa)) folds into the Lipoxygenase domain. N-linked (GlcNAc...) asparagine glycans are attached at residues Asn-60, Asn-91, Asn-106, Asn-116, and Asn-157. Positions 290, 294, 478, and 482 each coordinate Mn(2+). Residue Asn-513 is glycosylated (N-linked (GlcNAc...) asparagine). Val-618 lines the Mn(2+) pocket.

It belongs to the lipoxygenase family. It depends on Mn(2+) as a cofactor. In terms of processing, N- and O-glycosylated.

The protein resides in the secreted. It catalyses the reaction (9Z,12Z)-octadecadienoate + O2 = (11S)-hydroperoxy-(9Z,12Z)-octadecadienoate. It carries out the reaction (9Z,12Z)-octadecadienoate + O2 = (13R)-hydroperoxy-(9Z,11E)-octadecadienoate. The enzyme catalyses (9Z,12Z,15Z)-octadecatrienoate + O2 = (11S)-hydroperoxy-(9Z,12Z,15Z)-octadecatrienoate. The catalysed reaction is (9Z,12Z,15Z)-octadecatrienoate + O2 = (13R)-hydroperoxy-(9Z,11E,15Z)-octadecatrienoate. Its function is as follows. Lipoxygenase that metabolizes linoleic and alpha-linolenic acids to 11S- and 13R-hydroperoxy fatty acids. At the end of lipoxygenation, the intermediate product 11S-HPODE from linoleic acid is then transformed into 13R-HPODE as the final product. It also acts on alpha-linolenic acid producing 11S-HPOTrE and 13R-HPOTrE with subsequent transformation of 11S-HPOTrE to 13R-HPOTrE as the final product. Gamma-linolenic acid is a poor substrate. Oleate and arachidonate are not substrates. The sequence is that of Manganese lipoxygenase from Gaeumannomyces tritici (Wheat and barley take-all root rot fungus).